Consider the following 335-residue polypeptide: Ubiquinol oxidase 1b, mitochondrial (335 aa).

The N-terminal 47 residues, 1–47, are a transit peptide targeting the mitochondrion; it reads MSSRMAGATLLRHLGPRLFAAEPVYSGLAASARGVMPAAARIFPARM. A helical membrane pass occupies residues 160–180; sequence ALLLETVAGVPGMVGGMLLHL. Fe cation is bound by residues glutamate 164, glutamate 203, and histidine 206. A helical transmembrane segment spans residues 222-242; it reads ALVLAAQGVFFNAYFVGYLVS. Fe cation-binding residues include glutamate 254, glutamate 305, and histidine 308.

The protein belongs to the alternative oxidase family. It depends on Fe cation as a cofactor.

Its subcellular location is the mitochondrion inner membrane. The catalysed reaction is 2 a ubiquinol + O2 = 2 a ubiquinone + 2 H2O. Functionally, catalyzes the cyanide-resistant oxidation of ubiquinol and the reduction of molecular oxygen to water, but does not translocate protons and consequently is not linked to oxidative phosphorylation. May increase respiration when the cytochrome respiratory pathway is restricted, or in response to low temperatures. In Oryza sativa subsp. japonica (Rice), this protein is Ubiquinol oxidase 1b, mitochondrial.